The primary structure comprises 434 residues: Septin-6 (434 aa).

Ala-2 is subject to N-acetylalanine. Ser-27 is subject to Phosphoserine. A Septin-type G domain is found at 39 to 305 (QGFCFNILCV…ELYRRCKLEE (267 aa)). Residues 49 to 56 (GETGLGKS) form a G1 motif region. Residues 49-56 (GETGLGKS), Gly-104, 185-193 (KSDAISKSE), Gly-239, and Arg-254 each bind GTP. The G3 motif stretch occupies residues 101–104 (STVG). The tract at residues 184–187 (AKSD) is G4 motif. The stretch at 321–407 (QETYEAKRNE…QRKAAAELLQ (87 aa)) forms a coiled coil. Lys-367 carries the N6-acetyllysine modification. The tract at residues 403–434 (AELLQSQGSQAGGSQTLKRDKEKKNNPWLCIE) is disordered. A compositionally biased stretch (low complexity) spans 407 to 417 (QSQGSQAGGSQ). The residue at position 416 (Ser-416) is a Phosphoserine. Thr-418 carries the phosphothreonine modification.

The protein belongs to the TRAFAC class TrmE-Era-EngA-EngB-Septin-like GTPase superfamily. Septin GTPase family. Septins polymerize into heterooligomeric protein complexes that form filaments, and associate with cellular membranes, actin filaments and microtubules. GTPase activity is required for filament formation. Filaments are assembled from asymmetrical heterotrimers, composed of SEPTIN2, SEPTIN6 and SEPTIN7 that associate head-to-head to form a hexameric unit. Within the trimer, directly interacts with SEPTIN2 and SEPTIN7. Also interacts with SEPTIN9 and SEPTIN12. Interaction with SEPTIN12 alters filament structure. Component of a septin core octameric complex consisting of SEPTIN12, SEPTIN7, SEPTIN6 and SEPTIN2 or SEPTIN4 in the order 12-7-6-2-2-6-7-12 or 12-7-6-4-4-6-7-12 and located in the sperm annulus. Interacts with SOCS7. Interacts with HNRNPA1. In terms of tissue distribution, expressed in the cerebral cortex (at protein level). Associated with synaptic vesicles in various brain regions, including glomeruli of the olfactory bulb (at protein level).

The protein localises to the cytoplasm. It is found in the cytoskeleton. It localises to the spindle. The protein resides in the chromosome. Its subcellular location is the centromere. The protein localises to the kinetochore. It is found in the cleavage furrow. It localises to the midbody. The protein resides in the cell projection. Its subcellular location is the cilium. The protein localises to the flagellum. Its function is as follows. Filament-forming cytoskeletal GTPase. Required for normal organization of the actin cytoskeleton. Involved in cytokinesis. Forms a filamentous structure with SEPTIN12, SEPTIN6, SEPTIN2 and probably SEPTIN4 at the sperm annulus which is required for the structural integrity and motility of the sperm tail during postmeiotic differentiation. This is Septin-6 from Mus musculus (Mouse).